The primary structure comprises 429 residues: Arsenical pump membrane protein (429 aa).

Topologically, residues 1–20 (MLLAGAIFVLTIVLVIWQPK) are cytoplasmic. Residues 21–41 (GLGIGWSATLGAVLALVTGVV) form a helical membrane-spanning segment. The Periplasmic segment spans residues 42–45 (HPGD). Residues 46–66 (IPVVWNIVWNATAAFIAVIII) traverse the membrane as a helical segment. Residues 67–97 (SLLLDESGFFEWAALHVSRWGNGRGRLLFTW) lie on the Cytoplasmic side of the membrane. Residues 98-118 (IVLLGAAVAALFANDGAALIL) form a helical membrane-spanning segment. The Periplasmic segment spans residues 119–120 (TP). Residues 121 to 141 (IVIAMLLALGFSKGTTLAFVM) traverse the membrane as a helical segment. Topologically, residues 142-151 (AAGFIADTAS) are cytoplasmic. A helical transmembrane segment spans residues 152 to 172 (LPLIVSNLVNIVSADFFGLGF). At 173–177 (REYAS) the chain is on the periplasmic side. A helical transmembrane segment spans residues 178-198 (VMVPVDIAAIVATLVMLHLYF). At 199-227 (RKDIPQNYDMALLKSPAEAIKDPATFKTG) the chain is on the cytoplasmic side. 2 helical membrane-spanning segments follow: residues 228-248 (WVVLLLLLVGFFVLEPLGIPV) and 249-269 (SAIAAVGALILFVVAKRGHAI). The Cytoplasmic segment spans residues 270 to 273 (NTGK). Residues 274-294 (VLRGAPWQIVIFSLGMYLVVY) traverse the membrane as a helical segment. At 295–310 (GLRNAGLTEYLSGVLN) the chain is on the periplasmic side. The helical transmembrane segment at 311–331 (VLADNGLWAATLGTGFLTAFL) threads the bilayer. Residues 332–406 (SSIMNNMPTV…ISWGYYFRTG (75 aa)) lie on the Cytoplasmic side of the membrane. The chain crosses the membrane as a helical span at residues 407-427 (IIMTLPVLFVTLAALALRLSF). Residues 428 to 429 (TL) are Periplasmic-facing.

Belongs to the ArsB family.

The protein resides in the cell inner membrane. In terms of biological role, involved in arsenical resistance. Thought to form the channel of an arsenite pump. This chain is Arsenical pump membrane protein (arsB), found in Shigella flexneri.